The chain runs to 460 residues: 2-methylcitrate synthase, mitochondrial (460 aa).

The N-terminal 24 residues, 1 to 24 (MALPLRTARHASRLAQTIGRRGYA), are a transit peptide targeting the mitochondrion. CoA-binding residues include Arg69 and Lys187. Position 264 (His264) interacts with oxaloacetate. A CoA-binding site is contributed by Leu299. The active site involves His300. CoA is bound by residues Val341, Gly343, and Tyr344. The oxaloacetate site is built by His346 and Arg355. Residue His346 is part of the active site. Positions 395, 396, and 401 each coordinate CoA. The active site involves Asp403. Oxaloacetate contacts are provided by Arg429 and Arg449.

It belongs to the citrate synthase family. In terms of assembly, homodimer.

Its subcellular location is the mitochondrion matrix. It carries out the reaction propanoyl-CoA + oxaloacetate + H2O = (2S,3S)-2-methylcitrate + CoA + H(+). The catalysed reaction is oxaloacetate + acetyl-CoA + H2O = citrate + CoA + H(+). The protein operates within organic acid metabolism; propanoate degradation. Its activity is regulated as follows. Partially inhibited by ATP. Functionally, catalyzes the synthesis of (2S,3S)-2-methylcitrate from propionyl-CoA and oxaloacetate and also from acetyl-CoA and oxaloacetate with a greater efficiency. Also has citrate synthase activity and can substitute for the loss of citA activity. This Emericella nidulans (strain FGSC A4 / ATCC 38163 / CBS 112.46 / NRRL 194 / M139) (Aspergillus nidulans) protein is 2-methylcitrate synthase, mitochondrial.